Consider the following 501-residue polypeptide: UPF0288 protein Maeo_0995 (501 aa).

The protein belongs to the UPF0288 family.

The protein is UPF0288 protein Maeo_0995 of Methanococcus aeolicus (strain ATCC BAA-1280 / DSM 17508 / OCM 812 / Nankai-3).